Consider the following 197-residue polypeptide: MNLRQKVIETLEEGKSVAIKYQDVRDYLDLKTGHRVIFLEHVNPAKETAAEILADLGNLAKSTIYSKYTTNEIVRDIKKRSKNRNVLLVFNDFQLLSKNTARVLLDLMEDVQVLCSIRGRPQKGQGRLLKRMTILSDRSDEVTDIKIPLIVFASFIAILTFVKAGSTIYNRNHFDFYLFSAAIFVGISVGRTLLWIS.

This is an uncharacterized protein from Methanothermobacter thermautotrophicus (Methanobacterium thermoformicicum).